The chain runs to 118 residues: UPF0342 protein BpOF4_11360 (118 aa).

Belongs to the UPF0342 family.

This chain is UPF0342 protein BpOF4_11360, found in Alkalihalophilus pseudofirmus (strain ATCC BAA-2126 / JCM 17055 / OF4) (Bacillus pseudofirmus).